The following is a 396-amino-acid chain: MTKTIAINAGSSSLKWQLYLMPEEKVLAKGLIERIGLKDSISTVKFDGRSEQQILDIENHTQAVKILLDDLIRFDIIKAYDEITGVGHRVVAGGEYFKESTVVEGDVLEKVEELSLLAPLHNPANAAGVRAFKELLPDITSVVVFDTSFHTSMPEKAYRYPLPTKYYTENKVRKYGAHGTSHQFVAGEAAKLLGRPLEDLKLITCHIGNGGSITAVKAGKSVDTSMGFTPLGGIMMGTRTGDIDPAIIPYLMQYTEDFNTPEDISRVLNRESGLLGVSANSSDMRDIEAAVAEWNHEASLAYEMYVDRIQKHIGQYFAVLNGADAIVFTAGVGENAENFRRDVISGISWFGCDVDDEKNVFGVTGDISTEAAKIRVLVIPTDEELVIARDVERLKK.

Position 8 (asparagine 8) interacts with Mg(2+). Lysine 15 provides a ligand contact to ATP. Arginine 89 is a binding site for substrate. The active-site Proton donor/acceptor is aspartate 146. ATP is bound by residues 206 to 210, 283 to 285, and 331 to 335; these read HIGNG, DMR, and GVGEN. Position 383 (glutamate 383) interacts with Mg(2+).

It belongs to the acetokinase family. As to quaternary structure, homodimer. It depends on Mg(2+) as a cofactor. The cofactor is Mn(2+).

The protein resides in the cytoplasm. It catalyses the reaction acetate + ATP = acetyl phosphate + ADP. The protein operates within metabolic intermediate biosynthesis; acetyl-CoA biosynthesis; acetyl-CoA from acetate: step 1/2. Functionally, catalyzes the formation of acetyl phosphate from acetate and ATP. Can also catalyze the reverse reaction. In Streptococcus pneumoniae (strain JJA), this protein is Acetate kinase.